The sequence spans 117 residues: Non-specific lipid-transfer protein 2B (117 aa).

A signal peptide spans Met-1 to Ala-25. Intrachain disulfides connect Cys-29–Cys-76, Cys-39–Cys-53, Cys-54–Cys-99, and Cys-74–Cys-113.

It belongs to the plant LTP family. Expressed in roots, mesocotyls and developing leaves.

Functionally, plant non-specific lipid-transfer proteins transfer phospholipids as well as galactolipids across membranes. May play a role in wax or cutin deposition in the cell walls of expanding epidermal cells and certain secretory tissues. This chain is Non-specific lipid-transfer protein 2B (LTP2-B), found in Oryza sativa subsp. japonica (Rice).